Here is a 106-residue protein sequence, read N- to C-terminus: Large ribosomal subunit protein uL24 (106 aa).

Positions 1–20 are disordered; the sequence is MNKRAKSKNREPLRKSPVKR. Residues 8 to 20 show a composition bias toward basic and acidic residues; it reads KNREPLRKSPVKR.

It belongs to the universal ribosomal protein uL24 family. In terms of assembly, part of the 50S ribosomal subunit.

Functionally, one of two assembly initiator proteins, it binds directly to the 5'-end of the 23S rRNA, where it nucleates assembly of the 50S subunit. Its function is as follows. One of the proteins that surrounds the polypeptide exit tunnel on the outside of the subunit. The chain is Large ribosomal subunit protein uL24 from Methylacidiphilum infernorum (isolate V4) (Methylokorus infernorum (strain V4)).